The primary structure comprises 198 residues: Proteasome subunit beta type-2 (198 aa).

The protein belongs to the peptidase T1B family. In terms of assembly, the 26S proteasome consists of a 20S proteasome core and two 19S regulatory subunits. The 20S proteasome core is composed of 28 subunits that are arranged in four stacked rings, resulting in a barrel-shaped structure. The two end rings are each formed by seven alpha subunits, and the two central rings are each formed by seven beta subunits. The catalytic chamber with the active sites is on the inside of the barrel.

The protein localises to the cytoplasm. The protein resides in the nucleus. Functionally, non-catalytic component of the proteasome, a multicatalytic proteinase complex which is characterized by its ability to cleave peptides with Arg, Phe, Tyr, Leu, and Glu adjacent to the leaving group at neutral or slightly basic pH. The proteasome has an ATP-dependent proteolytic activity. The protein is Proteasome subunit beta type-2 (psmB2) of Dictyostelium discoideum (Social amoeba).